The following is an 85-amino-acid chain: Small ribosomal subunit protein bS16c (85 aa).

This sequence belongs to the bacterial ribosomal protein bS16 family.

The protein resides in the plastid. Its subcellular location is the chloroplast. The sequence is that of Small ribosomal subunit protein bS16c from Agrostis stolonifera (Creeping bentgrass).